Consider the following 273-residue polypeptide: Undecaprenyl-diphosphatase (273 aa).

7 helical membrane passes run Ser-6–Ser-26, Ala-45–Trp-65, Leu-90–His-110, Leu-116–Ala-136, Tyr-190–Leu-210, Ala-222–Ile-242, and Ile-252–Phe-272.

The protein belongs to the UppP family.

It is found in the cell inner membrane. It catalyses the reaction di-trans,octa-cis-undecaprenyl diphosphate + H2O = di-trans,octa-cis-undecaprenyl phosphate + phosphate + H(+). In terms of biological role, catalyzes the dephosphorylation of undecaprenyl diphosphate (UPP). Confers resistance to bacitracin. This is Undecaprenyl-diphosphatase from Salmonella arizonae (strain ATCC BAA-731 / CDC346-86 / RSK2980).